The sequence spans 339 residues: UDP-N-acetylenolpyruvoylglucosamine reductase (339 aa).

One can recognise an FAD-binding PCMH-type domain in the interval Val19–Val189. Residue Arg166 is part of the active site. The Proton donor role is filled by Ser239. The active site involves Glu335.

It belongs to the MurB family. FAD serves as cofactor.

The protein resides in the cytoplasm. The enzyme catalyses UDP-N-acetyl-alpha-D-muramate + NADP(+) = UDP-N-acetyl-3-O-(1-carboxyvinyl)-alpha-D-glucosamine + NADPH + H(+). It participates in cell wall biogenesis; peptidoglycan biosynthesis. Its function is as follows. Cell wall formation. The chain is UDP-N-acetylenolpyruvoylglucosamine reductase from Pseudomonas syringae pv. syringae (strain B728a).